The chain runs to 146 residues: Ankyrin repeat-containing protein P16F5.05c (146 aa).

ANK repeat units lie at residues 1–31, 35–64, 70–99, and 103–132; these read MDVD…ELSR, NGNS…KEVI, SGNT…DPHI, and YEKS…AKGS.

The protein localises to the cytoplasm. The protein resides in the nucleus. This chain is Ankyrin repeat-containing protein P16F5.05c, found in Schizosaccharomyces pombe (strain 972 / ATCC 24843) (Fission yeast).